The primary structure comprises 198 residues: Ribosome maturation factor RimM (198 aa).

A disordered region spans residues 1-21; the sequence is MPPPTASTPDDSADPGPDFAD. The region spanning 122-195 is the PRC barrel domain; sequence DDELFADDLV…RIVVRPIDGL (74 aa).

The protein belongs to the RimM family. Binds ribosomal protein uS19.

It is found in the cytoplasm. Its function is as follows. An accessory protein needed during the final step in the assembly of 30S ribosomal subunit, possibly for assembly of the head region. Essential for efficient processing of 16S rRNA. May be needed both before and after RbfA during the maturation of 16S rRNA. It has affinity for free ribosomal 30S subunits but not for 70S ribosomes. This is Ribosome maturation factor RimM from Salinibacter ruber (strain DSM 13855 / M31).